Here is a 235-residue protein sequence, read N- to C-terminus: tRNA (guanine-N(1)-)-methyltransferase (235 aa).

Residues Gly114 and 134 to 139 each bind S-adenosyl-L-methionine; that span reads IGDYIL.

The protein belongs to the RNA methyltransferase TrmD family. In terms of assembly, homodimer.

It is found in the cytoplasm. The catalysed reaction is guanosine(37) in tRNA + S-adenosyl-L-methionine = N(1)-methylguanosine(37) in tRNA + S-adenosyl-L-homocysteine + H(+). Its function is as follows. Specifically methylates guanosine-37 in various tRNAs. In Ehrlichia ruminantium (strain Welgevonden), this protein is tRNA (guanine-N(1)-)-methyltransferase.